A 78-amino-acid polypeptide reads, in one-letter code: Large ribosomal subunit protein bL28 (78 aa).

The interval 1 to 21 is disordered; it reads MSRVCQVTGKRPMVGNNRSHA.

This sequence belongs to the bacterial ribosomal protein bL28 family.

This is Large ribosomal subunit protein bL28 from Shewanella halifaxensis (strain HAW-EB4).